The chain runs to 436 residues: UDP-N-acetylglucosamine 1-carboxyvinyltransferase 1 (436 aa).

22 to 23 (KN) provides a ligand contact to phosphoenolpyruvate. Residue R93 coordinates UDP-N-acetyl-alpha-D-glucosamine. C117 (proton donor) is an active-site residue. The residue at position 117 (C117) is a 2-(S-cysteinyl)pyruvic acid O-phosphothioketal. UDP-N-acetyl-alpha-D-glucosamine contacts are provided by residues 122–126 (RPIDQ), D306, and V328.

The protein belongs to the EPSP synthase family. MurA subfamily.

Its subcellular location is the cytoplasm. The enzyme catalyses phosphoenolpyruvate + UDP-N-acetyl-alpha-D-glucosamine = UDP-N-acetyl-3-O-(1-carboxyvinyl)-alpha-D-glucosamine + phosphate. The protein operates within cell wall biogenesis; peptidoglycan biosynthesis. Functionally, cell wall formation. Adds enolpyruvyl to UDP-N-acetylglucosamine. Essential for cell growth. The sequence is that of UDP-N-acetylglucosamine 1-carboxyvinyltransferase 1 from Bacillus subtilis (strain 168).